Here is a 183-residue protein sequence, read N- to C-terminus: Ribosome rescue factor SmrB (183 aa).

Residues 98 to 173 form the Smr domain; it reads LDLHGLTQLQ…GDAALLVLIE (76 aa).

This sequence belongs to the SmrB family. As to quaternary structure, associates with collided ribosomes, but not with correctly translating polysomes.

Acts as a ribosome collision sensor. Detects stalled/collided disomes (pairs of ribosomes where the leading ribosome is stalled and a second ribosome has collided with it) and endonucleolytically cleaves mRNA at the 5' boundary of the stalled ribosome. Stalled/collided disomes form a new interface (primarily via the 30S subunits) that binds SmrB. Cleaved mRNA becomes available for tmRNA ligation, leading to ribosomal subunit dissociation and rescue of stalled ribosomes. The protein is Ribosome rescue factor SmrB of Escherichia fergusonii (strain ATCC 35469 / DSM 13698 / CCUG 18766 / IAM 14443 / JCM 21226 / LMG 7866 / NBRC 102419 / NCTC 12128 / CDC 0568-73).